Here is a 561-residue protein sequence, read N- to C-terminus: Excitatory amino acid transporter 4 (561 aa).

The Cytoplasmic portion of the chain corresponds to 1 to 52 (MSSHGNSLFLRESGAGGGCLQGLQDSLQQRALRTRLRLQTMTREHVRRFLRR). Ser2 is modified (phosphoserine). Transmembrane regions (helical) follow at residues 53 to 73 (NAFI…AFAL), 96 to 116 (MLQM…MASL), and 130 to 150 (VYYM…VTII). 3 N-linked (GlcNAc...) asparagine glycosylation sites follow: Asn213, Asn229, and Asn236. 3 helical membrane-spanning segments follow: residues 259–282 (SANG…IGGM), 292–319 (FFDS…LFLI), and 341–362 (LTVI…YFLV). The discontinuously helical intramembrane region spans 368–398 (FPFIGGILQALITAMGTSSSSATLPITFRCL). 385–387 (SSS) contributes to the L-aspartate binding site. Residues 408-434 (ITRFVLPVGATVNMDGTALYEALAAIF) form a helical membrane-spanning segment. Residues Gly416, Thr418, and Asn420 each contribute to the Na(+) site. Residues Thr424, 465 to 469 (IPQAG), Asp498, and Asn505 contribute to the L-aspartate site. An intramembrane region (discontinuously helical) is located at residues 448–481 (ITTISITATAASVGAAGIPQAGLVTMVIVLTSVG). Residues 495-516 (WFLDRLRTMTNVLGDSIGAAVI) traverse the membrane as a helical segment. Na(+) is bound by residues Asn505 and Asp509.

The protein belongs to the dicarboxylate/amino acid:cation symporter (DAACS) (TC 2.A.23) family. SLC1A6 subfamily. In terms of assembly, homotrimer.

It localises to the cell membrane. It carries out the reaction K(+)(in) + L-glutamate(out) + 3 Na(+)(out) + H(+)(out) = K(+)(out) + L-glutamate(in) + 3 Na(+)(in) + H(+)(in). It catalyses the reaction K(+)(in) + L-aspartate(out) + 3 Na(+)(out) + H(+)(out) = K(+)(out) + L-aspartate(in) + 3 Na(+)(in) + H(+)(in). The catalysed reaction is D-aspartate(out) + K(+)(in) + 3 Na(+)(out) + H(+)(out) = D-aspartate(in) + K(+)(out) + 3 Na(+)(in) + H(+)(in). Its function is as follows. Sodium-dependent, high-affinity amino acid transporter that mediates the uptake of L-glutamate and also L-aspartate and D-aspartate. Functions as a symporter that transports one amino acid molecule together with two or three Na(+) ions and one proton, in parallel with the counter-transport of one K(+) ion. Mediates Cl(-) flux that is not coupled to amino acid transport; this avoids the accumulation of negative charges due to aspartate and Na(+) symport. Plays a redundant role in the rapid removal of released glutamate from the synaptic cleft, which is essential for terminating the postsynaptic action of glutamate. This Rattus norvegicus (Rat) protein is Excitatory amino acid transporter 4 (Slc1a6).